Consider the following 77-residue polypeptide: Protein KleA (77 aa).

It to E.coli KleC (kcrB1).

This Escherichia coli protein is Protein KleA (kleA).